The sequence spans 287 residues: 4-hydroxybenzoate octaprenyltransferase (287 aa).

8 consecutive transmembrane segments (helical) span residues 21–39 (PIGT…WLAA), 95–115 (VLAL…TMNP), 116–136 (LTIG…FMKR), 138–158 (IPIP…MAYA), 161–181 (ANAL…WTIA), 213–233 (IIGA…QLSE), 234–251 (LGSS…LFVY), and 264–284 (CFQA…GVVI).

This sequence belongs to the UbiA prenyltransferase family. The cofactor is Mg(2+).

It localises to the cell inner membrane. It catalyses the reaction all-trans-octaprenyl diphosphate + 4-hydroxybenzoate = 4-hydroxy-3-(all-trans-octaprenyl)benzoate + diphosphate. The protein operates within cofactor biosynthesis; ubiquinone biosynthesis. Its function is as follows. Catalyzes the prenylation of para-hydroxybenzoate (PHB) with an all-trans polyprenyl group. Mediates the second step in the final reaction sequence of ubiquinone-8 (UQ-8) biosynthesis, which is the condensation of the polyisoprenoid side chain with PHB, generating the first membrane-bound Q intermediate 3-octaprenyl-4-hydroxybenzoate. This Aeromonas hydrophila subsp. hydrophila (strain ATCC 7966 / DSM 30187 / BCRC 13018 / CCUG 14551 / JCM 1027 / KCTC 2358 / NCIMB 9240 / NCTC 8049) protein is 4-hydroxybenzoate octaprenyltransferase.